A 185-amino-acid polypeptide reads, in one-letter code: ATP synthase subunit delta (185 aa).

It belongs to the ATPase delta chain family. F-type ATPases have 2 components, F(1) - the catalytic core - and F(0) - the membrane proton channel. F(1) has five subunits: alpha(3), beta(3), gamma(1), delta(1), epsilon(1). F(0) has three main subunits: a(1), b(2) and c(10-14). The alpha and beta chains form an alternating ring which encloses part of the gamma chain. F(1) is attached to F(0) by a central stalk formed by the gamma and epsilon chains, while a peripheral stalk is formed by the delta and b chains.

The protein resides in the cell inner membrane. F(1)F(0) ATP synthase produces ATP from ADP in the presence of a proton or sodium gradient. F-type ATPases consist of two structural domains, F(1) containing the extramembraneous catalytic core and F(0) containing the membrane proton channel, linked together by a central stalk and a peripheral stalk. During catalysis, ATP synthesis in the catalytic domain of F(1) is coupled via a rotary mechanism of the central stalk subunits to proton translocation. Its function is as follows. This protein is part of the stalk that links CF(0) to CF(1). It either transmits conformational changes from CF(0) to CF(1) or is implicated in proton conduction. The sequence is that of ATP synthase subunit delta from Gemmatimonas aurantiaca (strain DSM 14586 / JCM 11422 / NBRC 100505 / T-27).